The following is a 335-amino-acid chain: Agamous-like MADS-box protein AGL104 (335 aa).

The 61-residue stretch at 1-61 (MGRVKLEIKR…DRLSLFSGKT (61 aa)) folds into the MADS-box domain. Positions 124-151 (SDVEELEHEVCRLQQQLQMAEEELRRYE) form a coiled coil. A disordered region spans residues 302 to 335 (MPAQQSDIPGVTAETQVDHEVSDYETKVPQLSSQ). Residues 317–327 (QVDHEVSDYET) show a composition bias toward basic and acidic residues.

In terms of assembly, forms heterodimers with AGL30 and AGL65. As to expression, expressed in pollen.

It localises to the nucleus. Its function is as follows. Probable transcription factor that forms heterodimers with the MADS-box proteins AGL30 and AGL65 and is involved in the regulation of pollen maturation at the late stages of pollen development and pollen tube growth. The polypeptide is Agamous-like MADS-box protein AGL104 (Arabidopsis thaliana (Mouse-ear cress)).